Here is a 134-residue protein sequence, read N- to C-terminus: Small ribosomal subunit protein uS9c (134 aa).

This sequence belongs to the universal ribosomal protein uS9 family.

The protein localises to the plastid. Its subcellular location is the chloroplast. This Euglena gracilis protein is Small ribosomal subunit protein uS9c (rps9).